Consider the following 312-residue polypeptide: Ribosomal RNA small subunit methyltransferase H (312 aa).

S-adenosyl-L-methionine-binding positions include 35-37 (GGH), D55, D101, and Q108. Residues 285–306 (ALKPSEHEVTENSRSRSSVLRV) form a disordered region. Basic and acidic residues predominate over residues 287-298 (KPSEHEVTENSR).

It belongs to the methyltransferase superfamily. RsmH family.

The protein localises to the cytoplasm. It catalyses the reaction cytidine(1402) in 16S rRNA + S-adenosyl-L-methionine = N(4)-methylcytidine(1402) in 16S rRNA + S-adenosyl-L-homocysteine + H(+). Functionally, specifically methylates the N4 position of cytidine in position 1402 (C1402) of 16S rRNA. The polypeptide is Ribosomal RNA small subunit methyltransferase H (Aeromonas salmonicida (strain A449)).